The chain runs to 768 residues: Multidomain esterase (768 aa).

An N-terminal signal peptide occupies residues 1 to 40 (MKKHFVVGETIKRFLRIGTSLALSISTLSLLPSAPRLSSA). The segment at 41-264 (AGTIKIMPLG…YWLEQIEGYL (224 aa)) is acetylxylan esterase. The active-site Nucleophile; for acetylxylan esterase activity is S68. Active-site for acetylxylan esterase activity residues include D240 and H243. Residues 267-283 (SDGPQQTQPTQPSQGDS) show a composition bias toward low complexity. The tract at residues 267 to 289 (SDGPQQTQPTQPSQGDSGPELIY) is disordered. In terms of domain architecture, Dockerin spans 285 to 352 (PELIYGDLDG…IIGKIKEFTV (68 aa)). Residues 353-768 (AEKTVTEKPV…ADTFASKWLY (416 aa)) are glucuronoyl esterase. Residues 563 to 568 (GVSRYG) carry the GXSYXG catalytic site motif motif. Catalysis depends on S565, which acts as the Nucleophile; for glucuronoyl esterase activity. K569, E633, and W679 together coordinate substrate.

It in the N-terminal section; belongs to the carbohydrate esterase 3 (CE3) family. The protein in the C-terminal section; belongs to the carbohydrate esterase 15 (CE15) family.

The protein resides in the secreted. The enzyme catalyses Deacetylation of xylans and xylo-oligosaccharides.. It carries out the reaction a 4-O-methyl-alpha-D-glucuronosyl ester derivative + H2O = 4-O-methyl-alpha-D-glucuronate derivative + an alcohol + H(+). It functions in the pathway glycan degradation; xylan degradation. In terms of biological role, esterase involved in the degradation of plant cell wall polysaccharides. Catalyzes the deacetylation of chemically acetylated xylan and native, steam-extracted xylan. Seems to act in synergy with the xylanase XynD which produces xylo-oligosaccharides. Also catalyzes the deesterification of methyl esters of 4-O-methyl-D-glucuronic acid (MeGlcA) side residues in synthetic glucuronoxylan methyl ester, suggesting that it may be able to cleave ester linkages between MeGlcA carboxyl and more complex alcohols, including linkages between hemicellulose and lignin alcohols in plant cell walls. The polypeptide is Multidomain esterase (Ruminococcus flavefaciens).